Consider the following 232-residue polypeptide: LexA repressor (232 aa).

The segment at residues 26 to 46 is a DNA-binding region (H-T-H motif); that stretch reads FDEMKDALDLRSKSGIHRLIT. Catalysis depends on for autocatalytic cleavage activity residues S153 and K191.

The protein belongs to the peptidase S24 family. Homodimer.

The catalysed reaction is Hydrolysis of Ala-|-Gly bond in repressor LexA.. Its function is as follows. Represses a number of genes involved in the response to DNA damage (SOS response), including recA and lexA. In the presence of single-stranded DNA, RecA interacts with LexA causing an autocatalytic cleavage which disrupts the DNA-binding part of LexA, leading to derepression of the SOS regulon and eventually DNA repair. The polypeptide is LexA repressor (Bradyrhizobium sp. (strain BTAi1 / ATCC BAA-1182)).